A 417-amino-acid polypeptide reads, in one-letter code: MMPTQRLAEADPQIAKLIREETRRQAEGLELIASENFVSPAVLEALGSTLTNKYAEGYPGKRYYGGCEVVDQVEQLAIDRAKQLFGADHANVQPHAGSQANMAAYFALAKPGDTVLAMSLNFGGHLTHGSPVNFSGKLFKIVPYGLRQSDETIDMDEVARLAREHRPRILMVGASAYSRTLHFDRFAEIANEVGAAMVVDMAHIAGLVAAGLHPSPVPHSEIVTTTTHKTLRGPRGGMILCREAHAKTLNSQIFPGIQGGPLEHVIAAKAVAFGEALRPEFKAYQRRIVENAQVLAEGLKSAGLRLVSGGTDNHLMLVDLRPKKLTGKIAEEALGRAGITVNKNMIPWDPEKPMTTSGIRVGTPALTTRGMGSREMTLVAALIGRVLDAPADEQVLARVRGEVKDLCAHFPMYADRV.

(6S)-5,6,7,8-tetrahydrofolate contacts are provided by residues Leu-120 and 124-126; that span reads GHL. An N6-(pyridoxal phosphate)lysine modification is found at Lys-229.

It belongs to the SHMT family. Homodimer. Requires pyridoxal 5'-phosphate as cofactor.

Its subcellular location is the cytoplasm. It carries out the reaction (6R)-5,10-methylene-5,6,7,8-tetrahydrofolate + glycine + H2O = (6S)-5,6,7,8-tetrahydrofolate + L-serine. It functions in the pathway one-carbon metabolism; tetrahydrofolate interconversion. It participates in amino-acid biosynthesis; glycine biosynthesis; glycine from L-serine: step 1/1. In terms of biological role, catalyzes the reversible interconversion of serine and glycine with tetrahydrofolate (THF) serving as the one-carbon carrier. This reaction serves as the major source of one-carbon groups required for the biosynthesis of purines, thymidylate, methionine, and other important biomolecules. Also exhibits THF-independent aldolase activity toward beta-hydroxyamino acids, producing glycine and aldehydes, via a retro-aldol mechanism. The sequence is that of Serine hydroxymethyltransferase from Anaeromyxobacter sp. (strain K).